Consider the following 694-residue polypeptide: Transcriptional activator HAA1 (694 aa).

The segment at residues 1 to 40 is a DNA-binding region (copper-fist); the sequence is MVLINGIKYACERCIRGHRVTTCNHTDQPLMMIKPKGRPS. Residues Cys11, Cys14, Cys23, and His25 each coordinate Zn(2+). Disordered regions lie at residues 104–128 and 209–240; these read QKRH…SQPM and FNFL…DSSV. Residues 111–126 are compositionally biased toward polar residues; that stretch reads SPSSSQKKGRSISRSQ. Residues Ser125, Ser231, Ser241, and Ser291 each carry the phosphoserine modification. 4 disordered regions span residues 332-388, 479-514, 566-588, and 650-677; these read FDIN…NGLF, EKER…HRYP, SSIH…SRQD, and MIST…PPSQ. Residues 336-349 are compositionally biased toward polar residues; that stretch reads DNCNRINSKSYSKT. Over residues 350–378 the composition is skewed to low complexity; sequence NSMNGNGMNNSNNNNINSNGNDKNNNNSS. 2 stretches are compositionally biased toward polar residues: residues 566-577 and 664-677; these read SSIHSVPQSINS and SPMS…PPSQ.

It localises to the nucleus. Its function is as follows. Regulates the transcription of a set of genes, many of which encode membrane proteins. Among the genes regulated are YGR138C and YRO2. Does not seem to be dependent on copper. This is Transcriptional activator HAA1 (HAA1) from Saccharomyces cerevisiae (strain ATCC 204508 / S288c) (Baker's yeast).